The following is a 278-amino-acid chain: Leucine-rich repeat-containing protein 10 (278 aa).

LRR repeat units lie at residues leucine 30–phenylalanine 51, glutamine 52–leucine 74, asparagine 76–leucine 97, lysine 98–glutamine 121, leucine 123–leucine 143, serine 144–leucine 166, arginine 167–methionine 189, and phenylalanine 191–serine 213. The segment covering arginine 239 to arginine 250 has biased composition (basic and acidic residues). The disordered stretch occupies residues arginine 239–serine 278. Residues alanine 269–serine 278 are compositionally biased toward pro residues.

It is found in the nucleus. Functionally, may play important roles in cardiac development and/or cardiac function. The protein is Leucine-rich repeat-containing protein 10 (LRRC10) of Bos taurus (Bovine).